Here is an 866-residue protein sequence, read N- to C-terminus: Leucine--tRNA ligase (866 aa).

The short motif at 42–52 is the 'HIGH' region element; sequence PYPSGKLHMGH. Positions 630 to 634 match the 'KMSKS' region motif; sequence KMSKS. Residue K633 coordinates ATP.

The protein belongs to the class-I aminoacyl-tRNA synthetase family.

It is found in the cytoplasm. The catalysed reaction is tRNA(Leu) + L-leucine + ATP = L-leucyl-tRNA(Leu) + AMP + diphosphate. This is Leucine--tRNA ligase from Laribacter hongkongensis (strain HLHK9).